We begin with the raw amino-acid sequence, 225 residues long: Probable iron export ATP-binding protein FetA (225 aa).

An ABC transporter domain is found at 8-225; that stretch reads LQLQNVGYLA…EMQEARYELA (218 aa). Residue 40–47 participates in ATP binding; the sequence is GPSGCGKS.

Belongs to the ABC transporter superfamily. In terms of assembly, the complex is composed of two ATP-binding proteins (FetA) and two transmembrane proteins (FetB).

The protein resides in the cell inner membrane. In terms of biological role, part of the ABC transporter complex FetAB, which is probably involved in iron export and enhances resistance to H(2)O(2)-mediated oxidative stress. Probably responsible for energy coupling to the transport system. The protein is Probable iron export ATP-binding protein FetA (fetA) of Escherichia coli (strain K12).